We begin with the raw amino-acid sequence, 770 residues long: Transcription activator AMTR1 (770 aa).

Residues cysteine 7 to cysteine 34 constitute a DNA-binding region (zn(2)-C6 fungal-type).

Its subcellular location is the nucleus. In terms of biological role, transcription factor that regulates the expression of the gene clusters that mediate the biosynthesis of AM-toxins, host-selective toxins (HSTs) causing Alternaria blotch on apple, a worldwide distributed disease. AM-toxins have two target sites for affecting susceptible apple cells; they cause invagination of the plasma membrane and electrolyte loss and chloroplast disorganization. The chain is Transcription activator AMTR1 from Alternaria alternata (Alternaria rot fungus).